A 319-amino-acid chain; its full sequence is 4-hydroxy-3-methylbut-2-enyl diphosphate reductase (319 aa).

Cys15 lines the [4Fe-4S] cluster pocket. (2E)-4-hydroxy-3-methylbut-2-enyl diphosphate contacts are provided by His44 and His77. Positions 44 and 77 each coordinate dimethylallyl diphosphate. Residues His44 and His77 each contribute to the isopentenyl diphosphate site. Residue Cys99 participates in [4Fe-4S] cluster binding. (2E)-4-hydroxy-3-methylbut-2-enyl diphosphate is bound at residue His127. His127 is a binding site for dimethylallyl diphosphate. An isopentenyl diphosphate-binding site is contributed by His127. Glu129 acts as the Proton donor in catalysis. Thr172 contacts (2E)-4-hydroxy-3-methylbut-2-enyl diphosphate. Cys202 is a [4Fe-4S] cluster binding site. Residues Ser230, Ser231, Asn232, and Ser274 each coordinate (2E)-4-hydroxy-3-methylbut-2-enyl diphosphate. The dimethylallyl diphosphate site is built by Ser230, Ser231, Asn232, and Ser274. Isopentenyl diphosphate contacts are provided by Ser230, Ser231, Asn232, and Ser274.

The protein belongs to the IspH family. The cofactor is [4Fe-4S] cluster.

It carries out the reaction isopentenyl diphosphate + 2 oxidized [2Fe-2S]-[ferredoxin] + H2O = (2E)-4-hydroxy-3-methylbut-2-enyl diphosphate + 2 reduced [2Fe-2S]-[ferredoxin] + 2 H(+). The enzyme catalyses dimethylallyl diphosphate + 2 oxidized [2Fe-2S]-[ferredoxin] + H2O = (2E)-4-hydroxy-3-methylbut-2-enyl diphosphate + 2 reduced [2Fe-2S]-[ferredoxin] + 2 H(+). The protein operates within isoprenoid biosynthesis; dimethylallyl diphosphate biosynthesis; dimethylallyl diphosphate from (2E)-4-hydroxy-3-methylbutenyl diphosphate: step 1/1. It functions in the pathway isoprenoid biosynthesis; isopentenyl diphosphate biosynthesis via DXP pathway; isopentenyl diphosphate from 1-deoxy-D-xylulose 5-phosphate: step 6/6. Catalyzes the conversion of 1-hydroxy-2-methyl-2-(E)-butenyl 4-diphosphate (HMBPP) into a mixture of isopentenyl diphosphate (IPP) and dimethylallyl diphosphate (DMAPP). Acts in the terminal step of the DOXP/MEP pathway for isoprenoid precursor biosynthesis. The polypeptide is 4-hydroxy-3-methylbut-2-enyl diphosphate reductase (Xanthomonas euvesicatoria pv. vesicatoria (strain 85-10) (Xanthomonas campestris pv. vesicatoria)).